The sequence spans 639 residues: Chaperone protein DnaK (639 aa).

Thr198 is modified (phosphothreonine; by autocatalysis). The interval 604–639 is disordered; the sequence is KSQAQGGDNADAGKQANAAADDVVDAEFEEVKDDKK. Residues 606 to 624 show a composition bias toward low complexity; it reads QAQGGDNADAGKQANAAAD. Positions 625 to 639 are enriched in acidic residues; sequence DVVDAEFEEVKDDKK.

The protein belongs to the heat shock protein 70 family.

Its function is as follows. Acts as a chaperone. This Shewanella baltica (strain OS223) protein is Chaperone protein DnaK.